The primary structure comprises 243 residues: UPF0758 protein Cyan7425_1778 (243 aa).

In terms of domain architecture, MPN spans 112 to 235 (TIINDPAVAA…FRSLRQTTKL (124 aa)). Zn(2+) contacts are provided by histidine 184, histidine 186, and aspartate 197. Positions 184–197 (HNHPSGNVEPSPED) match the JAMM motif motif.

Belongs to the UPF0758 family.

In Cyanothece sp. (strain PCC 7425 / ATCC 29141), this protein is UPF0758 protein Cyan7425_1778.